The sequence spans 291 residues: GTPase Era (291 aa).

An Era-type G domain is found at 2-167 (KSGFVSIIGR…LDEIVKCLNE (166 aa)). Positions 10–17 (GRTNAGKS) are G1. 10-17 (GRTNAGKS) is a GTP binding site. The tract at residues 36–40 (NATRR) is G2. The interval 57–60 (DTPG) is G3. Residues 57-61 (DTPGL) and 116-119 (NKVD) each bind GTP. The segment at 116–119 (NKVD) is G4. The segment at 146–148 (YSS) is G5. The 89-residue stretch at 186–274 (YRDFILESIY…LLKLFVTVKK (89 aa)) folds into the KH type-2 domain.

It belongs to the TRAFAC class TrmE-Era-EngA-EngB-Septin-like GTPase superfamily. Era GTPase family. In terms of assembly, monomer.

Its subcellular location is the cytoplasm. It localises to the cell inner membrane. Its function is as follows. An essential GTPase that binds both GDP and GTP, with rapid nucleotide exchange. Plays a role in 16S rRNA processing and 30S ribosomal subunit biogenesis and possibly also in cell cycle regulation and energy metabolism. The polypeptide is GTPase Era (Campylobacter jejuni subsp. doylei (strain ATCC BAA-1458 / RM4099 / 269.97)).